The chain runs to 210 residues: ATP-dependent dethiobiotin synthetase BioD (210 aa).

ATP is bound at residue 13–18; it reads DVGKTV. T17 is a binding site for Mg(2+). The active site involves K33. The Mg(2+) site is built by R47 and E101. ATP is bound by residues 101–104 and 185–187; these read EGAG and PPL.

It belongs to the dethiobiotin synthetase family. In terms of assembly, homodimer. Mg(2+) serves as cofactor.

The protein resides in the cytoplasm. It carries out the reaction (7R,8S)-7,8-diammoniononanoate + CO2 + ATP = (4R,5S)-dethiobiotin + ADP + phosphate + 3 H(+). Its pathway is cofactor biosynthesis; biotin biosynthesis; biotin from 7,8-diaminononanoate: step 1/2. Catalyzes a mechanistically unusual reaction, the ATP-dependent insertion of CO2 between the N7 and N8 nitrogen atoms of 7,8-diaminopelargonic acid (DAPA, also called 7,8-diammoniononanoate) to form a ureido ring. The sequence is that of ATP-dependent dethiobiotin synthetase BioD from Afipia carboxidovorans (strain ATCC 49405 / DSM 1227 / KCTC 32145 / OM5) (Oligotropha carboxidovorans).